Here is a 617-residue protein sequence, read N- to C-terminus: AUGMIN subunit 3 (617 aa).

Coiled coils occupy residues 107-140 (DATL…SSAL), 314-334 (LHSL…LYQK), and 481-504 (AIIQ…ENSL).

Belongs to the HAUS3 family. Part of the augmin complex composed of 8 subunits. The complex acts on microtubules and interacts with gamma-tubulin in spindles and the phragmoplast. Interacts with AUG1.

The protein localises to the cytoplasm. The protein resides in the cytoskeleton. It localises to the spindle. Its subcellular location is the phragmoplast. In terms of biological role, involved in microtubules reorganization during spindle and phragmoplast development. Required for gamma-tubulin localization during mitosis. This Arabidopsis thaliana (Mouse-ear cress) protein is AUGMIN subunit 3.